The primary structure comprises 60 residues: Small integral membrane protein 3 (60 aa).

A helical transmembrane segment spans residues 20 to 40 (IWVIVLIILATIVIMTSLLLC).

The protein resides in the membrane. This Homo sapiens (Human) protein is Small integral membrane protein 3 (SMIM3).